We begin with the raw amino-acid sequence, 103 residues long: MPNQRIRIRLKAFDHKLIDQSTAEIVETAKRTGAQVSGPIPLPTRKERYTVLISPHVNKDARDQYEIRTHKRLVDIIEPTDKTVDALMRLDLAAGVDVQISLG.

It belongs to the universal ribosomal protein uS10 family. In terms of assembly, part of the 30S ribosomal subunit.

Its function is as follows. Involved in the binding of tRNA to the ribosomes. The protein is Small ribosomal subunit protein uS10 of Alteromonas mediterranea (strain DSM 17117 / CIP 110805 / LMG 28347 / Deep ecotype).